A 382-amino-acid polypeptide reads, in one-letter code: Na(+)/H(+) antiporter NhaA (382 aa).

10 helical membrane passes run 5-25, 42-62, 88-108, 116-136, 145-165, 169-189, 261-281, 282-302, 327-347, and 353-373; these read INLLREFSVPLIAGVITALAW, FGGVSLHFLVNELFMVLFFGI, LATLGGVIGPVLVYLSLNAVI, GWGIPTATDIALAWLVARLVF, FLLLLAVADDAIGLAIIAVFY, VHPTEPMWLFLTVAGIVAAYI, IVVDFGLFLFGLANAGVRFSS, VGTATWLVLTALLVGKTAGIL, TGLVAGMGLTVALFVAGVAFV, and GAAKMGALLSGGVLPVAVALG.

Belongs to the NhaA Na(+)/H(+) (TC 2.A.33) antiporter family.

Its subcellular location is the cell inner membrane. The enzyme catalyses Na(+)(in) + 2 H(+)(out) = Na(+)(out) + 2 H(+)(in). Na(+)/H(+) antiporter that extrudes sodium in exchange for external protons. The polypeptide is Na(+)/H(+) antiporter NhaA (Geobacter metallireducens (strain ATCC 53774 / DSM 7210 / GS-15)).